The sequence spans 224 residues: Octanoyl-[acyl-carrier-protein]:protein N-octanoyltransferase LIPT2, mitochondrial (224 aa).

In terms of domain architecture, BPL/LPL catalytic spans 37–217 (SNIPNTLLLC…AFTEQFNCTL (181 aa)). Substrate-binding positions include 81 to 88 (RGGLITFH), 147 to 149 (AIG), and 160 to 162 (GLA). The Acyl-thioester intermediate role is filled by Cys178.

It belongs to the LipB family.

Its subcellular location is the mitochondrion. It catalyses the reaction octanoyl-[ACP] + L-lysyl-[protein] = N(6)-octanoyl-L-lysyl-[protein] + holo-[ACP] + H(+). The protein operates within protein modification; protein lipoylation via endogenous pathway; protein N(6)-(lipoyl)lysine from octanoyl-[acyl-carrier-protein]: step 1/2. Its function is as follows. Catalyzes the transfer of endogenously produced octanoic acid from octanoyl-acyl-carrier-protein (octanoyl-ACP) onto the lipoyl domains of lipoate-dependent enzymes such as the protein H of the glycine cleavage system (GCSH). Lipoyl-ACP can also act as a substrate although octanoyl-ACP is likely to be the physiological substrate. This chain is Octanoyl-[acyl-carrier-protein]:protein N-octanoyltransferase LIPT2, mitochondrial (lipt2), found in Danio rerio (Zebrafish).